The chain runs to 451 residues: Probable multidrug resistance protein NorM (451 aa).

The next 10 membrane-spanning stretches (helical) occupy residues 44–66 (IAAISVGISIWSPIILFGHGLLL), 92–109 (YWLATLISLVIMIVLWNS), 130–147 (YIRILLWSTPGYLYFQVI), 162–179 (VIGLIGLLFNIVVSYTLI), 186–208 (FNYGSTGCGISAIIVYWFMFIAM), 247–269 (GFPIALSLFCEITLFTLITLLIA), 282–304 (ALNISSTIFILPLSIATAASIRL), 319–341 (IILSSQIIGLIISTTISTFIILF), 391–413 (IIFIITCTSYWIVGFPFGYFLAL), and 423–445 (AIGFWYGILIALITSSIMILFRI).

This sequence belongs to the multi antimicrobial extrusion (MATE) (TC 2.A.66.1) family.

It localises to the cell membrane. Multidrug efflux pump. The chain is Probable multidrug resistance protein NorM (norM) from Buchnera aphidicola subsp. Baizongia pistaciae (strain Bp).